Consider the following 249-residue polypeptide: Small ribosomal subunit protein uS4m (249 aa).

The S4 RNA-binding domain occupies 133–193 (RRLDIIIYRA…PEIVNLLRNQ (61 aa)).

The protein belongs to the universal ribosomal protein uS4 family.

The protein localises to the mitochondrion. The polypeptide is Small ribosomal subunit protein uS4m (RPS4) (Reclinomonas americana).